An 88-amino-acid chain; its full sequence is Small ribosomal subunit protein bS20 (88 aa).

The protein belongs to the bacterial ribosomal protein bS20 family.

Its function is as follows. Binds directly to 16S ribosomal RNA. The protein is Small ribosomal subunit protein bS20 of Legionella pneumophila (strain Paris).